We begin with the raw amino-acid sequence, 109 residues long: Insulin (109 aa).

The N-terminal stretch at 1-24 is a signal peptide; that stretch reads MAPWMHLLTVLALLALWGPNSVQA. 3 cysteine pairs are disulfide-bonded: cysteine 31–cysteine 93, cysteine 43–cysteine 106, and cysteine 92–cysteine 97. Positions 56 to 84 are cleaved as a propeptide — c peptide; sequence ELEDLQVEQAELGLEAGGLQPSALEMILQ.

This sequence belongs to the insulin family. In terms of assembly, heterodimer of a B chain and an A chain linked by two disulfide bonds.

It localises to the secreted. Its function is as follows. Insulin decreases blood glucose concentration. It increases cell permeability to monosaccharides, amino acids and fatty acids. It accelerates glycolysis, the pentose phosphate cycle, and glycogen synthesis in liver. This Octodon degus (Degu) protein is Insulin (INS).